The primary structure comprises 101 residues: Synaptobrevin-B (101 aa).

Residues 1 to 76 (MSNNPNNSGQ…RRQMWCRNMK (76 aa)) lie on the Cytoplasmic side of the membrane. The region spanning 13-73 (KTQSILQEVD…VTIRRQMWCR (61 aa)) is the v-SNARE coiled-coil homology domain. A helical; Anchor for type IV membrane protein membrane pass occupies residues 77-97 (LQLIIIAVVILVLAVILIPII). Topologically, residues 98–101 (MKFV) are vesicular.

This sequence belongs to the synaptobrevin family.

The protein localises to the cytoplasmic vesicle. Its subcellular location is the secretory vesicle membrane. Involved in the targeting and/or fusion of transport vesicles to their target membrane. In Dictyostelium discoideum (Social amoeba), this protein is Synaptobrevin-B (sybB).